Here is a 381-residue protein sequence, read N- to C-terminus: Mannitol-1-phosphate 5-dehydrogenase (381 aa).

3–14 (AVHFGAGNIGRG) is a binding site for NAD(+).

Belongs to the mannitol dehydrogenase family.

The catalysed reaction is D-mannitol 1-phosphate + NAD(+) = beta-D-fructose 6-phosphate + NADH + H(+). This is Mannitol-1-phosphate 5-dehydrogenase from Exiguobacterium sibiricum (strain DSM 17290 / CCUG 55495 / CIP 109462 / JCM 13490 / 255-15).